We begin with the raw amino-acid sequence, 328 residues long: Probable cell division protein WhiA (328 aa).

The segment at residues 275–308 (SLEELGQLASPPMTKDAVAGRIRRLLSMADKRAE) is a DNA-binding region (H-T-H motif).

It belongs to the WhiA family.

Its function is as follows. Involved in cell division and chromosome segregation. The protein is Probable cell division protein WhiA of Corynebacterium urealyticum (strain ATCC 43042 / DSM 7109).